The following is a 294-amino-acid chain: Ferredoxin--NADP reductase (294 aa).

An FAD-binding FR-type domain is found at 13-137 (KNPYIGKCLS…TGPVGKEMLL (125 aa)). Residues 72 to 75 (RLYS), 93 to 95 (CVR), Tyr99, 111 to 113 (VCS), and Thr152 each bind FAD. Positions 75 and 95 each coordinate NADP(+). NADP(+) is bound by residues Thr152, 184–185 (IP), 214–215 (SR), Lys224, 224–228 (KMYIQ), 253–254 (GL), and Glu292.

Belongs to the ferredoxin--NADP reductase type 1 family. FAD serves as cofactor.

The protein localises to the cellular thylakoid membrane. The catalysed reaction is 2 reduced [2Fe-2S]-[ferredoxin] + NADP(+) + H(+) = 2 oxidized [2Fe-2S]-[ferredoxin] + NADPH. In Spirulina sp, this protein is Ferredoxin--NADP reductase (petH).